The sequence spans 806 residues: NADH:(hydroxy)cinnamate reductase subunit CrdB (806 aa).

FMN phosphoryl serine is present on serine 257. 7 residues coordinate FAD: alanine 310, glutamate 329, asparagine 337, threonine 338, glycine 342, glycine 343, and aspartate 576. Residue arginine 635 is the Proton donor of the active site. Residues histidine 742, glutamate 771, alanine 786, and leucine 787 each contribute to the FAD site.

Belongs to the FAD-dependent oxidoreductase 2 family. FRD/SDH subfamily. In terms of assembly, NADH:(hydroxy)cinnamate reductase Crd is a heterodimer composed of CrdA and CrdB subunits, encoded by adjacent genes. Requires FAD as cofactor. FMN is required as a cofactor. Is flavinylated on Ser-257 by ApbE, encoded in a neighboring gene. Covalent attachment of FMN is essential for catalytic activity.

It catalyses the reaction 3-phenylpropanoate + NAD(+) = (E)-cinnamate + NADH + H(+). The enzyme catalyses 3-(3,4-dihydroxyphenyl)propanoate + NAD(+) = (E)-caffeate + NADH + H(+). It carries out the reaction phloretate + NAD(+) = (E)-4-coumarate + NADH + H(+). The catalysed reaction is dihydroferulate + NAD(+) = (E)-ferulate + NADH + H(+). Is inactivated by molecular oxygen, allowing regulation of Crd activity by medium oxygen level. Functionally, component of the NADH:(hydroxy)cinnamate reductase Crd that catalyzes the reduction of the double bond in cinnamate, p-coumarate, caffeate, and ferulate under anaerobic conditions with NADH or methyl viologen as the electron donor. Is moderately active against acrylate and practically inactive against urocanate, fumarate, methacrylate and crotonate. CrdB is the catalytic subunit that binds substrates. Is likely involved in protecting V.ruber from (hydroxy)cinnamate poisoning. The protein is NADH:(hydroxy)cinnamate reductase subunit CrdB of Vibrio ruber (strain DSM 16370 / JCM 11486 / BCRC 17186 / CECT 7878 / LMG 23124 / VR1).